Reading from the N-terminus, the 157-residue chain is Arginine repressor (157 aa).

It belongs to the ArgR family.

It is found in the cytoplasm. It participates in amino-acid biosynthesis; L-arginine biosynthesis [regulation]. Regulates arginine biosynthesis genes. This chain is Arginine repressor, found in Deinococcus radiodurans (strain ATCC 13939 / DSM 20539 / JCM 16871 / CCUG 27074 / LMG 4051 / NBRC 15346 / NCIMB 9279 / VKM B-1422 / R1).